We begin with the raw amino-acid sequence, 362 residues long: Phosphoserine aminotransferase (362 aa).

L-glutamate contacts are provided by Ser9 and Arg42. Pyridoxal 5'-phosphate contacts are provided by residues 76 to 77 (GR), Trp102, Thr153, Asp174, and Gln197. N6-(pyridoxal phosphate)lysine is present on Lys198. 239-240 (NT) is a pyridoxal 5'-phosphate binding site.

Belongs to the class-V pyridoxal-phosphate-dependent aminotransferase family. SerC subfamily. Homodimer. The cofactor is pyridoxal 5'-phosphate.

The protein resides in the cytoplasm. It carries out the reaction O-phospho-L-serine + 2-oxoglutarate = 3-phosphooxypyruvate + L-glutamate. The enzyme catalyses 4-(phosphooxy)-L-threonine + 2-oxoglutarate = (R)-3-hydroxy-2-oxo-4-phosphooxybutanoate + L-glutamate. The protein operates within amino-acid biosynthesis; L-serine biosynthesis; L-serine from 3-phospho-D-glycerate: step 2/3. Its pathway is cofactor biosynthesis; pyridoxine 5'-phosphate biosynthesis; pyridoxine 5'-phosphate from D-erythrose 4-phosphate: step 3/5. Functionally, catalyzes the reversible conversion of 3-phosphohydroxypyruvate to phosphoserine and of 3-hydroxy-2-oxo-4-phosphonooxybutanoate to phosphohydroxythreonine. The chain is Phosphoserine aminotransferase from Escherichia coli (strain ATCC 8739 / DSM 1576 / NBRC 3972 / NCIMB 8545 / WDCM 00012 / Crooks).